The sequence spans 173 residues: RNA pyrophosphohydrolase (173 aa).

A Nudix hydrolase domain is found at 11–164 (PYRKCVGIVV…KKHVYMKVVS (154 aa)). The short motif at 52 to 73 (GGIDEDEKPLDAAYRELYEETG) is the Nudix box element.

The protein belongs to the Nudix hydrolase family. RppH subfamily. A divalent metal cation is required as a cofactor.

In terms of biological role, accelerates the degradation of transcripts by removing pyrophosphate from the 5'-end of triphosphorylated RNA, leading to a more labile monophosphorylated state that can stimulate subsequent ribonuclease cleavage. The polypeptide is RNA pyrophosphohydrolase (Bartonella tribocorum (strain CIP 105476 / IBS 506)).